A 503-amino-acid polypeptide reads, in one-letter code: N-fatty-acyl-amino acid synthase/hydrolase PM20D1 (503 aa).

The first 24 residues, 1 to 24, serve as a signal peptide directing secretion; it reads MAELLASLPAWAAVLLLFFATVSG. N72 is a glycosylation site (N-linked (GlcNAc...) asparagine). H125 contacts Zn(2+). D127 is a catalytic residue. D157 is a Zn(2+) binding site. The active-site Proton acceptor is the E191. Zn(2+)-binding residues include E192 and D218. Residue N443 is glycosylated (N-linked (GlcNAc...) asparagine). Residue H465 coordinates Zn(2+).

It belongs to the peptidase M20A family. It depends on Zn(2+) as a cofactor. As to expression, in addition to being detected in blood (at protein level), PM20D1 is also highly expressed in other tissues including brown adipocytes, liver and kidney. It is also expressed in small intestine, large intestine, heart and pancreas.

Its subcellular location is the secreted. It catalyses the reaction an N-acyl-L-amino acid + H2O = an L-alpha-amino acid + a carboxylate. It carries out the reaction an N-acyl-aromatic L-alpha-amino acid + H2O = an aromatic L-alpha-amino acid + a carboxylate. The enzyme catalyses N-(5Z,8Z,11Z,14Z)-eicosatetraenoyl-glycine + H2O = (5Z,8Z,11Z,14Z)-eicosatetraenoate + glycine. The catalysed reaction is N-hexadecanoyl-L-phenylalanine + H2O = hexadecanoate + L-phenylalanine. It catalyses the reaction N-octadecanoyl-L-phenylalanine + H2O = octadecanoate + L-phenylalanine. It carries out the reaction N-(4Z,7Z,10Z,13Z,16Z,19Z-docosahexaenoyl)-L-phenylalanine + H2O = (4Z,7Z,10Z,13Z,16Z,19Z)-docosahexaenoate + L-phenylalanine. The enzyme catalyses N-(9Z-octadecenoyl)-L-asparagine + H2O = L-asparagine + (9Z)-octadecenoate. The catalysed reaction is (9Z)-octadecenoate + glycine = N-(9Z-octadecenoyl)glycine + H2O. It catalyses the reaction N-(9Z-octadecenoyl)-L-lysine + H2O = L-lysine + (9Z)-octadecenoate. It carries out the reaction N-(9Z-octadecenoyl)-L-methionine + H2O = (9Z)-octadecenoate + L-methionine. The enzyme catalyses N-(9Z-octadecenoyl)-L-serine + H2O = L-serine + (9Z)-octadecenoate. The catalysed reaction is N-(9Z-octadecenoyl)-L-tryptophan + H2O = L-tryptophan + (9Z)-octadecenoate. It catalyses the reaction N-(9Z-octadecenoyl)-L-tyrosine + H2O = L-tyrosine + (9Z)-octadecenoate. It carries out the reaction N-(9Z-octadecenoyl)-L-glutamine + H2O = L-glutamine + (9Z)-octadecenoate. The enzyme catalyses N-(5Z,8Z,11Z,14Z-eicosatetraenoyl)-L-serine + H2O = (5Z,8Z,11Z,14Z)-eicosatetraenoate + L-serine. The catalysed reaction is (5Z,8Z,11Z,14Z)-eicosatetraenoate + L-phenylalanine = N-(5Z,8Z,11Z,14Z-eicosatetraenoyl)-L-phenylalanine + H2O. It catalyses the reaction N-(9Z-octadecenoyl)-L-leucine + H2O = L-leucine + (9Z)-octadecenoate. It carries out the reaction L-phenylalanine + (9Z)-octadecenoate = N-(9Z-octadecenoyl)-L-phenylalanine + H2O. Its pathway is amino-acid metabolism. The protein operates within energy metabolism; electron transfer. It functions in the pathway lipid metabolism; fatty acid metabolism. With respect to regulation, lipoproteins are powerful coactivators of PM20D1 activity in vitro and NAA biosynthesis in vivo. Secreted enzyme that regulates the endogenous N-fatty acyl amino acid (NAAs) tissue and circulating levels by functioning as a bidirectional NAA synthase/hydrolase. It condenses free fatty acids and free amino acids to generate NAAs and bidirectionally catalyzes the reverse hydrolysis reaction. Some of these NAAs stimulate oxidative metabolism via mitochondrial uncoupling, increasing energy expenditure in a UPC1-independent manner. Thereby, this secreted protein may indirectly regulate whole body energy expenditure. PM20D1 circulates in tight association with both low- and high-density (LDL and HDL,respectively) lipoprotein particles. This is N-fatty-acyl-amino acid synthase/hydrolase PM20D1 from Mus musculus (Mouse).